The primary structure comprises 483 residues: MTTALEEQNAQQAATAGRVVRVIGAVVDVEFPRGELPALYNALTVEVTLESVKKTVVLEVAQHLGDNLIRTIAMAPTDGLVRGAAVTDTARPISVPVGDVVKGHVFNALGDCLDDVSLNNNPEIERWGIHREPPSFDQLEGKTEILETGIKVIDLLTPYVKGGKIGLFGGAGVGKTVLIQEMITRIAREFSGTSVFAGVGERTREGTDLFLEMEEMGVLQDTALVFGQMDEPPGVRMRVALSGLTMAEYFRDVQNQDVLLFIDNIFRFTQAGSEVSTLLGRMPSAVGYQPTLADEMGVLQERITSTKGRSITSLQAVYVPADDYTDPAPATTFAHLDATTELDRSIASKGIYPAVNPLTSTSRILEPAIVGERHYEVSQRVIGILQKNKELQDIIAILGMDELSEEDKITVARARRIERFLGQNFFVAEKFTGLPGSYVPLTDTVDAFERICNGDFDHYPDQAFNGLGGLDDVEAAYKKLTGK.

Position 169–176 (169–176 (GGAGVGKT)) interacts with ATP.

Belongs to the ATPase alpha/beta chains family. In terms of assembly, F-type ATPases have 2 components, CF(1) - the catalytic core - and CF(0) - the membrane proton channel. CF(1) has five subunits: alpha(3), beta(3), gamma(1), delta(1), epsilon(1). CF(0) has three main subunits: a(1), b(2) and c(9-12). The alpha and beta chains form an alternating ring which encloses part of the gamma chain. CF(1) is attached to CF(0) by a central stalk formed by the gamma and epsilon chains, while a peripheral stalk is formed by the delta and b chains.

It localises to the cell membrane. The enzyme catalyses ATP + H2O + 4 H(+)(in) = ADP + phosphate + 5 H(+)(out). Produces ATP from ADP in the presence of a proton gradient across the membrane. The catalytic sites are hosted primarily by the beta subunits. In Corynebacterium glutamicum (strain ATCC 13032 / DSM 20300 / JCM 1318 / BCRC 11384 / CCUG 27702 / LMG 3730 / NBRC 12168 / NCIMB 10025 / NRRL B-2784 / 534), this protein is ATP synthase subunit beta.